A 193-amino-acid chain; its full sequence is dTTP/UTP pyrophosphatase (193 aa).

Aspartate 71 serves as the catalytic Proton acceptor.

The protein belongs to the Maf family. YhdE subfamily. It depends on a divalent metal cation as a cofactor.

It is found in the cytoplasm. It catalyses the reaction dTTP + H2O = dTMP + diphosphate + H(+). The enzyme catalyses UTP + H2O = UMP + diphosphate + H(+). Functionally, nucleoside triphosphate pyrophosphatase that hydrolyzes dTTP and UTP. May have a dual role in cell division arrest and in preventing the incorporation of modified nucleotides into cellular nucleic acids. In Citrifermentans bemidjiense (strain ATCC BAA-1014 / DSM 16622 / JCM 12645 / Bem) (Geobacter bemidjiensis), this protein is dTTP/UTP pyrophosphatase.